We begin with the raw amino-acid sequence, 292 residues long: uncharacterized protein (292 aa).

The helical transmembrane segment at 13-35 (LFILFIIVVCIYLLPRVAINAFY) threads the bilayer.

It belongs to the serine esterase family.

It is found in the membrane. This is an uncharacterized protein from Salmonella typhi.